The following is a 185-amino-acid chain: Large ribosomal subunit protein uL22 (185 aa).

The protein belongs to the universal ribosomal protein uL22 family. In terms of assembly, part of the 50S ribosomal subunit.

Its function is as follows. This protein binds specifically to 23S rRNA. It makes multiple contacts with different domains of the 23S rRNA in the assembled 50S subunit and ribosome. In terms of biological role, the globular domain of the protein is located near the polypeptide exit tunnel on the outside of the subunit, while an extended beta-hairpin is found that lines the wall of the exit tunnel in the center of the 70S ribosome. The sequence is that of Large ribosomal subunit protein uL22 from Caldivirga maquilingensis (strain ATCC 700844 / DSM 13496 / JCM 10307 / IC-167).